The chain runs to 641 residues: Probable serine protease FE772_23065 (641 aa).

The chain crosses the membrane as a helical span at residues 532–552 (WVELIAILAAAGWIRVMLIGL).

Belongs to the peptidase S1 family.

Its subcellular location is the cell inner membrane. Functionally, possibly a dedicated protease for substrate gasdermin bGSDM; cleaves the bGSDM precursor, releasing the pore-forming moiety, which integrates into the membrane and triggers cell death. Involved in defense against bacteriophages. When this probable 4 gene operon (bGSDM-FE772_23060-FE772_23065-FE772_23070) is inserted into E.coli it provides nearly 100-fold protection against phages T5 and T6 and about 8-fold against phage T4. The operon without bGSDM no longer protects against phage. The protein is Probable serine protease FE772_23065 of Lysobacter enzymogenes.